Here is a 324-residue protein sequence, read N- to C-terminus: D-alanine--D-alanine ligase (324 aa).

The ATP-grasp domain maps to 121 to 321 (NQYLKAFGVR…IKDVMTDIIE (201 aa)). 149-204 (VEKIGLPCFIKPNLGGSSFGVTKVKTREQIQPAIAKAFSEAEEVMIEAFMGGTELT) is a binding site for ATP. Mg(2+)-binding residues include D275, E288, and N290.

This sequence belongs to the D-alanine--D-alanine ligase family. Mg(2+) serves as cofactor. It depends on Mn(2+) as a cofactor.

The protein resides in the cytoplasm. It catalyses the reaction 2 D-alanine + ATP = D-alanyl-D-alanine + ADP + phosphate + H(+). It functions in the pathway cell wall biogenesis; peptidoglycan biosynthesis. Cell wall formation. This Bacteroides fragilis (strain ATCC 25285 / DSM 2151 / CCUG 4856 / JCM 11019 / LMG 10263 / NCTC 9343 / Onslow / VPI 2553 / EN-2) protein is D-alanine--D-alanine ligase.